A 433-amino-acid chain; its full sequence is Glutamate-1-semialdehyde 2,1-aminomutase (433 aa).

Position 273 is an N6-(pyridoxal phosphate)lysine (Lys273).

This sequence belongs to the class-III pyridoxal-phosphate-dependent aminotransferase family. HemL subfamily. Homodimer. Pyridoxal 5'-phosphate serves as cofactor.

The protein resides in the cytoplasm. It carries out the reaction (S)-4-amino-5-oxopentanoate = 5-aminolevulinate. The protein operates within porphyrin-containing compound metabolism; protoporphyrin-IX biosynthesis; 5-aminolevulinate from L-glutamyl-tRNA(Glu): step 2/2. It participates in porphyrin-containing compound metabolism; chlorophyll biosynthesis. The protein is Glutamate-1-semialdehyde 2,1-aminomutase (hemL) of Synechocystis sp. (strain ATCC 27184 / PCC 6803 / Kazusa).